We begin with the raw amino-acid sequence, 315 residues long: Olfactory receptor 5AN6 (315 aa).

The Extracellular segment spans residues 1–29 (MPGGRNSTVITKFILVGFSDFPKLKLVLF). Residues 30 to 50 (VIFLGSYLSTVVWNLGLIILI) form a helical membrane-spanning segment. The Cytoplasmic segment spans residues 51–54 (RIDP). A helical membrane pass occupies residues 55–75 (YLHTPMYFFLSNLSFLDFCYI). Topologically, residues 76–99 (SSTTPKMLSGFFQKSKSISFVGCT) are extracellular. A disulfide bond links C98 and C180. A helical transmembrane segment spans residues 100–120 (MQYFIFSSLGLSECCLLAAMA). The Cytoplasmic portion of the chain corresponds to 121–123 (YDR). Residues 124–143 (YAAICNPLLYTAIMSPSLCV) form a helical membrane-spanning segment. H144 is a topological domain (extracellular). The chain crosses the membrane as a helical span at residues 145 to 165 (MVVGAYSTGLLGSLIQLCAIL). At 166-202 (QLHFCGPNIINHFFCDLPQLLVLSCSETFPLQVLKFV) the chain is on the cytoplasmic side. The helical transmembrane segment at 203-223 (IAVIFGVASVIVILISYGYII) threads the bilayer. The Extracellular segment spans residues 224–240 (GTILNISSVEGRSKAFN). A helical transmembrane segment spans residues 241–261 (TCASHLTAVTLFFGSGLFVYM). Residues 262 to 272 (RPSSNSSQGYD) are Cytoplasmic-facing. A helical membrane pass occupies residues 273–293 (KMASVFYTVVIPMLNPLIYSL). The Extracellular segment spans residues 294 to 315 (RNKEIKDALQRCKNKCFSQCHC).

This sequence belongs to the G-protein coupled receptor 1 family. As to expression, localized in the dorsomedial and ventral region of the olfactory bulb.

It is found in the cell membrane. Odorant receptor specific for muscone. Muscone-binding causes a conformation change that triggers signaling via G(s)-class of G alpha protein GNAL, activating adenylyl cyclase. The chain is Olfactory receptor 5AN6 from Mus musculus (Mouse).